We begin with the raw amino-acid sequence, 138 residues long: Large ribosomal subunit protein bL17 (138 aa).

The protein belongs to the bacterial ribosomal protein bL17 family. Part of the 50S ribosomal subunit. Contacts protein L32.

This chain is Large ribosomal subunit protein bL17, found in Bradyrhizobium diazoefficiens (strain JCM 10833 / BCRC 13528 / IAM 13628 / NBRC 14792 / USDA 110).